The sequence spans 132 residues: uncharacterized protein (132 aa).

This is an uncharacterized protein from Saccharomyces cerevisiae (strain ATCC 204508 / S288c) (Baker's yeast).